Here is a 905-residue protein sequence, read N- to C-terminus: Core protein VP3 (905 aa).

It belongs to the orbivirus VP3 family.

It is found in the virion. The VP3 protein is one of the five proteins (with VP1, VP4, VP6 and VP7) which form the inner capsid of the virus. The sequence is that of Core protein VP3 (Segment-3) from African horse sickness virus 6 (AHSV-6).